Reading from the N-terminus, the 592-residue chain is Mitochondrial-type heat shock protein 70 (592 aa).

It belongs to the heat shock protein 70 family.

The protein resides in the nucleus. In terms of biological role, may act as a chaperone. This chain is Mitochondrial-type heat shock protein 70 (HSP70), found in Encephalitozoon cuniculi (strain GB-M1) (Microsporidian parasite).